The sequence spans 439 residues: Ribosomal protein uS12 methylthiotransferase RimO (439 aa).

The region spanning Lys-5–Ser-117 is the MTTase N-terminal domain. Residues Cys-14, Cys-48, Cys-80, Cys-149, Cys-153, and Cys-156 each coordinate [4Fe-4S] cluster. The Radical SAM core domain maps to Thr-135–Arg-363. In terms of domain architecture, TRAM spans Glu-366–Lys-437.

This sequence belongs to the methylthiotransferase family. RimO subfamily. The cofactor is [4Fe-4S] cluster.

Its subcellular location is the cytoplasm. It carries out the reaction L-aspartate(89)-[ribosomal protein uS12]-hydrogen + (sulfur carrier)-SH + AH2 + 2 S-adenosyl-L-methionine = 3-methylsulfanyl-L-aspartate(89)-[ribosomal protein uS12]-hydrogen + (sulfur carrier)-H + 5'-deoxyadenosine + L-methionine + A + S-adenosyl-L-homocysteine + 2 H(+). In terms of biological role, catalyzes the methylthiolation of an aspartic acid residue of ribosomal protein uS12. This Sulfurovum sp. (strain NBC37-1) protein is Ribosomal protein uS12 methylthiotransferase RimO.